A 132-amino-acid polypeptide reads, in one-letter code: Fatty acid-binding protein, adipocyte (132 aa).

C2 carries the N-acetylcysteine modification. Residue S13 is modified to Phosphoserine. Residue Y20 is modified to Phosphotyrosine; by Tyr-kinases. The Nuclear localization signal signature appears at 22 to 32 (KEVGVGFATRK). 127-129 (RVY) contacts a fatty acid.

This sequence belongs to the calycin superfamily. Fatty-acid binding protein (FABP) family. Monomer. Homodimer. Interacts with PPARG.

Its subcellular location is the cytoplasm. It localises to the nucleus. In terms of biological role, lipid transport protein in adipocytes. Binds both long chain fatty acids and retinoic acid. Delivers long-chain fatty acids and retinoic acid to their cognate receptors in the nucleus. This chain is Fatty acid-binding protein, adipocyte (Fabp4), found in Rattus norvegicus (Rat).